Here is a 207-residue protein sequence, read N- to C-terminus: MPKYNVINQLGDLISTKDLKSNVFDIQPHQQALYDVINAQRAAMRQGTHATKTRAFVSGGGKKPWRQKGTGRARHGSIRSPLWRGGGVVFGPSPRNYSVKVNQKVSHLALKSALSSHFRQNQLILVDDFNLDTHKSKDFQKTLQKLNVTSKALIIVTNSNRNLTLASRNLPYVTLETAAHASVYQILNCKNLILTLDAVAYFEEVLK.

The segment at 56 to 77 is disordered; the sequence is FVSGGGKKPWRQKGTGRARHGS. Over residues 63-77 the composition is skewed to basic residues; sequence KPWRQKGTGRARHGS.

The protein belongs to the universal ribosomal protein uL4 family. In terms of assembly, part of the 50S ribosomal subunit.

In terms of biological role, one of the primary rRNA binding proteins, this protein initially binds near the 5'-end of the 23S rRNA. It is important during the early stages of 50S assembly. It makes multiple contacts with different domains of the 23S rRNA in the assembled 50S subunit and ribosome. Functionally, forms part of the polypeptide exit tunnel. The chain is Large ribosomal subunit protein uL4 from Phytoplasma australiense.